The sequence spans 534 residues: Peptide chain release factor 3 (534 aa).

The tr-type G domain occupies 9–278 (ARRRTFAIIS…FFIEHAPPPQ (270 aa)). Residues 18 to 25 (SHPDAGKT), 86 to 90 (DTPGH), and 140 to 143 (NKLD) contribute to the GTP site.

The protein belongs to the TRAFAC class translation factor GTPase superfamily. Classic translation factor GTPase family. PrfC subfamily.

It is found in the cytoplasm. Increases the formation of ribosomal termination complexes and stimulates activities of RF-1 and RF-2. It binds guanine nucleotides and has strong preference for UGA stop codons. It may interact directly with the ribosome. The stimulation of RF-1 and RF-2 is significantly reduced by GTP and GDP, but not by GMP. In Xanthomonas oryzae pv. oryzae (strain PXO99A), this protein is Peptide chain release factor 3.